We begin with the raw amino-acid sequence, 398 residues long: MKAVVLVVVSLLALSSINCDVFFEEKFPDDSWESNWVYSEHPGKEFGKFKLTAGKFFSDPEDDKGLKTSEDARFYALSRKFKPFSNEGKPLVVQFTVKHEQDIDCGGGYLKVFDCKLEQKDMHGETPYEIMFGPDICGPGTKKVHVIFSYKGKNHLIKKDIRCKDDVYTHLYTLIVKPDNTYEVLIDNEKVESGDLEADWDFLPNKKIKDPEAKKPEDWDDKPTIPDPEDKKPEDWDKPEHIPDPDATKPEDWDDEMDGEWEPPMIDNPDYKGVWAPKQIDNPAYKGPWVHPEIDNPEYTPDSNLYKRDEICAVGLDLWQVKSGTIFDDFLITDDPAAAKERGEVIKKRQEGEKKMKSEQDEAEREKEKAEKPDDEEDDEDLDDETGDAAPVEEHDEL.

The N-terminal stretch at 1–19 is a signal peptide; that stretch reads MKAVVLVVVSLLALSSINC. The tract at residues 20–197 is N-domain; sequence DVFFEEKFPD…NEKVESGDLE (178 aa). A disulfide bridge connects residues Cys105 and Cys137. Positions 109, 111, 128, and 135 each coordinate an alpha-D-glucoside. A run of 7 repeats spans residues 191–202, 210–221, 227–238, 244–255, 259–269, 273–283, and 287–297. The segment at 191-255 is 4 X approximate repeats; sequence VESGDLEADW…DATKPEDWDD (65 aa). A P-domain region spans residues 198 to 308; the sequence is ADWDFLPNKK…YTPDSNLYKR (111 aa). Basic and acidic residues predominate over residues 207–251; it reads KIKDPEAKKPEDWDDKPTIPDPEDKKPEDWDKPEHIPDPDATKPE. Positions 207–257 are disordered; that stretch reads KIKDPEAKKPEDWDDKPTIPDPEDKKPEDWDKPEHIPDPDATKPEDWDDEM. A 3 X approximate repeats region spans residues 259–297; sequence GEWEPPMIDNPDYKGVWAPKQIDNPAYKGPWVHPEIDNP. The C-domain stretch occupies residues 309–398; the sequence is DEICAVGLDL…AAPVEEHDEL (90 aa). Asp317 is an an alpha-D-glucoside binding site. The interval 334-398 is disordered; sequence DDPAAAKERG…AAPVEEHDEL (65 aa). The span at 337 to 372 shows a compositional bias: basic and acidic residues; it reads AAAKERGEVIKKRQEGEKKMKSEQDEAEREKEKAEK. Residues 373 to 387 show a composition bias toward acidic residues; sequence PDDEEDDEDLDDETG. The Prevents secretion from ER signature appears at 395 to 398; that stretch reads HDEL.

It belongs to the calreticulin family. As to quaternary structure, monomer. Expressed in fat bodies. Not expressed in midgut, silk gland, ovary or testis.

Its subcellular location is the endoplasmic reticulum lumen. In terms of biological role, molecular calcium-binding chaperone promoting folding, oligomeric assembly and quality control in the ER via the calreticulin/calnexin cycle. This lectin may interact transiently with almost all of the monoglucosylated glycoproteins that are synthesized in the ER. This Bombyx mori (Silk moth) protein is Calreticulin.